The sequence spans 483 residues: Regulatory protein ViaA (483 aa).

The protein belongs to the ViaA family. As to quaternary structure, homodimer. Interacts with RavA.

The protein resides in the cytoplasm. Component of the RavA-ViaA chaperone complex, which may act on the membrane to optimize the function of some of the respiratory chains. ViaA stimulates the ATPase activity of RavA. This chain is Regulatory protein ViaA, found in Escherichia fergusonii (strain ATCC 35469 / DSM 13698 / CCUG 18766 / IAM 14443 / JCM 21226 / LMG 7866 / NBRC 102419 / NCTC 12128 / CDC 0568-73).